Consider the following 415-residue polypeptide: Adenosylhomocysteinase (415 aa).

Residues Thr53, Asp124, and Glu147 each coordinate substrate. Residue 148-150 (TTT) coordinates NAD(+). Residues Lys177 and Asp181 each coordinate substrate. NAD(+)-binding positions include Asn182, 211 to 216 (GYGWVG), Glu234, Asn269, 290 to 292 (SGH), and Asn337.

The protein belongs to the adenosylhomocysteinase family. Requires NAD(+) as cofactor.

The protein resides in the cytoplasm. The catalysed reaction is S-adenosyl-L-homocysteine + H2O = L-homocysteine + adenosine. The protein operates within amino-acid biosynthesis; L-homocysteine biosynthesis; L-homocysteine from S-adenosyl-L-homocysteine: step 1/1. Its function is as follows. May play a key role in the regulation of the intracellular concentration of adenosylhomocysteine. This is Adenosylhomocysteinase from Sulfolobus acidocaldarius (strain ATCC 33909 / DSM 639 / JCM 8929 / NBRC 15157 / NCIMB 11770).